The chain runs to 984 residues: Putative formate dehydrogenase SH0748 (984 aa).

One can recognise a 2Fe-2S ferredoxin-type domain in the interval Glu3–Asp79. [2Fe-2S] cluster is bound by residues Cys37, Cys48, Cys51, and Cys63. The 41-residue stretch at Asp79–Gly119 folds into the 4Fe-4S His(Cys)3-ligated-type domain. The [4Fe-4S] cluster site is built by His95, Cys99, Cys102, Cys109, Cys147, Cys150, Cys153, Cys157, Cys190, Cys193, Cys196, Cys200, Cys264, Cys267, Cys271, and Cys299. 4Fe-4S ferredoxin-type domains lie at Pro138–Thr165 and Asn181–Glu211. Residues Met252–Lys984 form a formate dehydrogenase region. One can recognise a 4Fe-4S Mo/W bis-MGD-type domain in the interval Ile257–Gln313.

It in the C-terminal section; belongs to the prokaryotic molybdopterin-containing oxidoreductase family. [2Fe-2S] cluster serves as cofactor. It depends on [4Fe-4S] cluster as a cofactor. Mo-bis(molybdopterin guanine dinucleotide) is required as a cofactor.

The catalysed reaction is formate + NAD(+) = CO2 + NADH. This is Putative formate dehydrogenase SH0748 from Staphylococcus haemolyticus (strain JCSC1435).